The primary structure comprises 593 residues: Putative auxin response factor 15 (593 aa).

The segment at residues 126-228 (FTKVLTASDI…ELRVGIRRAR (103 aa)) is a DNA-binding region (TF-B3). Residues 511–592 (RTCTKVQMQG…MVKRIYIQKR (82 aa)) form the PB1 domain.

This sequence belongs to the ARF family. As to quaternary structure, homodimers and heterodimers.

It is found in the nucleus. In terms of biological role, auxin response factors (ARFs) are transcriptional factors that bind specifically to the DNA sequence 5'-TGTCTC-3' found in the auxin-responsive promoter elements (AuxREs). Could act as transcriptional activator or repressor. Formation of heterodimers with Aux/IAA proteins may alter their ability to modulate early auxin response genes expression. The protein is Putative auxin response factor 15 (ARF15) of Arabidopsis thaliana (Mouse-ear cress).